We begin with the raw amino-acid sequence, 389 residues long: D-alanine--D-alanine ligase (389 aa).

Residues 1–12 show a composition bias toward polar residues; the sequence is MSTENLPQNPEQ. Residues 1-22 form a disordered region; the sequence is MSTENLPQNPEQSPRRPPRKPR. One can recognise an ATP-grasp domain in the interval 169 to 379; that stretch reads KAVFTSYGLK…YPELVDRLVQ (211 aa). Position 205–260 (205–260) interacts with ATP; sequence AGEHGWPLFVKPARAGSSIGITKVDDLAGLDEAIEEARRHDPKILVEAALRGREIE. Mg(2+) contacts are provided by Asp333, Glu346, and Asn348.

It belongs to the D-alanine--D-alanine ligase family. Mg(2+) is required as a cofactor. It depends on Mn(2+) as a cofactor.

The protein localises to the cytoplasm. It carries out the reaction 2 D-alanine + ATP = D-alanyl-D-alanine + ADP + phosphate + H(+). Its pathway is cell wall biogenesis; peptidoglycan biosynthesis. Functionally, cell wall formation. This chain is D-alanine--D-alanine ligase (ddl), found in Streptomyces coelicolor (strain ATCC BAA-471 / A3(2) / M145).